Consider the following 395-residue polypeptide: Phosphoprotein (395 aa).

Disordered stretches follow at residues 31–109 (VETV…DTQL) and 126–214 (NKSS…PASV). Basic and acidic residues predominate over residues 65–74 (TPDRQNRSDK). 3 stretches are compositionally biased toward polar residues: residues 75-98 (QPST…QPPT), 146-168 (LPTQ…QNRA), and 203-212 (SGQSQDNTPA). The interval 222-285 (DFVQAMMSMM…LGMMKILDPG (64 aa)) is multimerization.

Belongs to the rubulavirus/avulavirus P protein family. In terms of assembly, homotetramer. Interacts (via multimerization domain) with polymerase L; this interaction forms the polymerase L-P complex. Interacts (via N-terminus) with N0 (via Ncore); this interaction allows P to chaperon N0 to avoid N polymerization before encapsidation. Interacts (via C-terminus) with N-RNA template; this interaction positions the polymerase on the template for both transcription and replication.

In terms of biological role, essential cofactor of the RNA polymerase L that plays a central role in the transcription and replication by forming the polymerase complex with RNA polymerase L and recruiting L to the genomic N-RNA template for RNA synthesis. Also plays a central role in the encapsidation of nascent RNA chains by forming the encapsidation complex with the nucleocapsid protein N (N-P complex). Acts as a chaperone for newly synthesized free N protein, so-called N0, allowing encapsidation of nascent RNA chains during replication. The nucleoprotein protein N prevents excessive phosphorylation of P, which leads to down-regulation of viral transcription/ replication. Participates, together with N, in the formation of viral factories (viroplasms), which are large inclusions in the host cytoplasm where replication takes place. The protein is Phosphoprotein (P/C) of Gallus gallus (Chicken).